Here is a 224-residue protein sequence, read N- to C-terminus: Adenosylcobinamide-GDP ribazoletransferase (224 aa).

The next 4 membrane-spanning stretches (helical) occupy residues 21–41, 44–64, 97–117, and 156–176; these read LSFK…AAIP, LLYL…ATGL, GGIF…HSPL, and WPAA…TTAV.

It belongs to the CobS family. Requires Mg(2+) as cofactor.

Its subcellular location is the cell membrane. The enzyme catalyses alpha-ribazole + adenosylcob(III)inamide-GDP = adenosylcob(III)alamin + GMP + H(+). It catalyses the reaction alpha-ribazole 5'-phosphate + adenosylcob(III)inamide-GDP = adenosylcob(III)alamin 5'-phosphate + GMP + H(+). It participates in cofactor biosynthesis; adenosylcobalamin biosynthesis; adenosylcobalamin from cob(II)yrinate a,c-diamide: step 7/7. In terms of biological role, joins adenosylcobinamide-GDP and alpha-ribazole to generate adenosylcobalamin (Ado-cobalamin). Also synthesizes adenosylcobalamin 5'-phosphate from adenosylcobinamide-GDP and alpha-ribazole 5'-phosphate. The polypeptide is Adenosylcobinamide-GDP ribazoletransferase (Pyrobaculum aerophilum (strain ATCC 51768 / DSM 7523 / JCM 9630 / CIP 104966 / NBRC 100827 / IM2)).